The chain runs to 507 residues: Proline--tRNA ligase (507 aa).

It belongs to the class-II aminoacyl-tRNA synthetase family. ProS type 3 subfamily. In terms of assembly, homodimer.

The protein resides in the cytoplasm. The enzyme catalyses tRNA(Pro) + L-proline + ATP = L-prolyl-tRNA(Pro) + AMP + diphosphate. In terms of biological role, catalyzes the attachment of proline to tRNA(Pro) in a two-step reaction: proline is first activated by ATP to form Pro-AMP and then transferred to the acceptor end of tRNA(Pro). The sequence is that of Proline--tRNA ligase from Protochlamydia amoebophila (strain UWE25).